Consider the following 508-residue polypeptide: Photosystem II CP47 reaction center protein (508 aa).

6 consecutive transmembrane segments (helical) span residues 21-36 (SVHIMHTALVAGWAGS), 101-115 (IVFSGLCFLAAIWHW), 140-156 (GIHLFLSGVACFGFGAF), 203-218 (IAAGTLGILAGLFHLS), 237-252 (VLSSSIAAVFFAAFVV), and 457-472 (SFALLFFFGHIWHGSR).

The protein belongs to the PsbB/PsbC family. PsbB subfamily. PSII is composed of 1 copy each of membrane proteins PsbA, PsbB, PsbC, PsbD, PsbE, PsbF, PsbH, PsbI, PsbJ, PsbK, PsbL, PsbM, PsbT, PsbX, PsbY, PsbZ, Psb30/Ycf12, at least 3 peripheral proteins of the oxygen-evolving complex and a large number of cofactors. It forms dimeric complexes. Requires Binds multiple chlorophylls. PSII binds additional chlorophylls, carotenoids and specific lipids. as cofactor.

The protein resides in the plastid. The protein localises to the chloroplast thylakoid membrane. Functionally, one of the components of the core complex of photosystem II (PSII). It binds chlorophyll and helps catalyze the primary light-induced photochemical processes of PSII. PSII is a light-driven water:plastoquinone oxidoreductase, using light energy to abstract electrons from H(2)O, generating O(2) and a proton gradient subsequently used for ATP formation. The sequence is that of Photosystem II CP47 reaction center protein from Draba nemorosa (Woodland whitlowgrass).